The primary structure comprises 614 residues: Sodium- and chloride-dependent betaine transporter (614 aa).

The Cytoplasmic portion of the chain corresponds to 1–44 (MDRKVAVHEDGYPVVSWVPEEGEMMDQKGKDQVKDRGQWTNKME). A run of 3 helical transmembrane segments spans residues 45–65 (FVLSVAGEIIGLGNVWRFPYL), 73–92 (AFFIPYFIFFFSCGIPVFFL), and 117–137 (GIGMASVVIESYLNIYYIIIL). The Extracellular portion of the chain corresponds to 138–210 (AWALFYLFSS…SGIHDLGSLR (73 aa)). A disulfide bridge links Cys-157 with Cys-166. Residues Asn-171 and Asn-183 are each glycosylated (N-linked (GlcNAc...) asparagine). Helical transmembrane passes span 211 to 229 (WELALCLLLAWIICYFCIW), 238 to 255 (VVYFTATFPYLMLIILLI), 291 to 308 (IFFSFAICQGCLTALGSY), 320 to 341 (IALCFLNSATSFVAGFVVFSIL), 374 to 393 (MPLSQLWSCLFFIMLLFLGL), 423 to 441 (VLILAISVLCYLMGLLLVT), 458 to 478 (GICLLFLSLFEVICIGWVYGA), 499 to 518 (ISWLFLTPGLCLATFFFSLS), and 538 to 556 (IGWLLAFSSMACVPLFIII). Residues 557 to 614 (TFLKTQGSFKKRLRRLITPDPSLPQPGRRPPQDGSSAQNCSSSPAKQELIAWEKETHL) are Cytoplasmic-facing. The disordered stretch occupies residues 574-602 (TPDPSLPQPGRRPPQDGSSAQNCSSSPAK). Polar residues predominate over residues 589–601 (DGSSAQNCSSSPA).

Belongs to the sodium:neurotransmitter symporter (SNF) (TC 2.A.22) family. SLC6A12 subfamily. As to quaternary structure, interacts with LIN7C. In terms of tissue distribution, predominantly expressed in the liver (sinusoidal hepatocyte plasma membranes), also present in the renal medulla, where it localizes to the basolateral membranes of collecting ducts (particularly at the papilla tip) and the thick ascending limbs of Henle (at protein level). Some expression is detected in the leptomeninges, but no expression is detected in brain parenchyma, brain blood vessels, ependymal cells, the renal cortex and the intestine.

It localises to the basolateral cell membrane. The protein localises to the cell membrane. The enzyme catalyses 4-aminobutanoate(out) + chloride(out) + 3 Na(+)(out) = 4-aminobutanoate(in) + chloride(in) + 3 Na(+)(in). It carries out the reaction glycine betaine(out) + 2 chloride(out) + 3 Na(+)(out) = glycine betaine(in) + 2 chloride(in) + 3 Na(+)(in). Transporter that mediates cellular uptake of betaine and GABA in a sodium- and chloride-dependent process. May have a role in regulation of GABAergic transmission in the brain through the reuptake of GABA into presynaptic terminals, as well as in osmotic regulation. Probably also involved in renal and hepatic osmotic regulation. The polypeptide is Sodium- and chloride-dependent betaine transporter (Slc6a12) (Mus musculus (Mouse)).